Consider the following 135-residue polypeptide: UPF0306 protein C8J_1355 (135 aa).

Belongs to the UPF0306 family.

This is UPF0306 protein C8J_1355 from Campylobacter jejuni subsp. jejuni serotype O:6 (strain 81116 / NCTC 11828).